We begin with the raw amino-acid sequence, 189 residues long: Anthranilate synthase component 2 (189 aa).

Residues 1–189 (MILIIDNYDS…QLLRNFLEYS (189 aa)) enclose the Glutamine amidotransferase type-1 domain. Residue 52 to 54 (GPG) coordinates L-glutamine. Residue C79 is the Nucleophile; for GATase activity of the active site. Residues Q83 and 129–130 (SL) contribute to the L-glutamine site. Active-site residues include H169 and E171.

As to quaternary structure, tetramer of two components I and two components II.

It localises to the plastid. The protein localises to the chloroplast. It carries out the reaction chorismate + L-glutamine = anthranilate + pyruvate + L-glutamate + H(+). The protein operates within amino-acid biosynthesis; L-tryptophan biosynthesis; L-tryptophan from chorismate: step 1/5. This chain is Anthranilate synthase component 2 (trpG), found in Pyropia yezoensis (Susabi-nori).